A 438-amino-acid polypeptide reads, in one-letter code: ATP phosphoribosyltransferase regulatory subunit (438 aa).

This sequence belongs to the class-II aminoacyl-tRNA synthetase family. HisZ subfamily. As to quaternary structure, heteromultimer composed of HisG and HisZ subunits.

It localises to the cytoplasm. It participates in amino-acid biosynthesis; L-histidine biosynthesis; L-histidine from 5-phospho-alpha-D-ribose 1-diphosphate: step 1/9. In terms of biological role, required for the first step of histidine biosynthesis. May allow the feedback regulation of ATP phosphoribosyltransferase activity by histidine. This is ATP phosphoribosyltransferase regulatory subunit from Geobacter sulfurreducens (strain ATCC 51573 / DSM 12127 / PCA).